We begin with the raw amino-acid sequence, 313 residues long: Type I restriction enzyme EcoprrI endonuclease subunit (313 aa).

Belongs to the HsdR family. In terms of assembly, the type I restriction/modification system is composed of three polypeptides R, M and S; the restriction enzyme has stoichiometry R(2)M(2)S(1) while the methyltransferase is M(2)S(1).

It catalyses the reaction Endonucleolytic cleavage of DNA to give random double-stranded fragments with terminal 5'-phosphates, ATP is simultaneously hydrolyzed.. The subtype C restriction (R) subunit of a type I restriction enzyme that recognizes 5'-CCAN(7)RTGC-3' and cleaves a random distance away. The R subunit is required for both endonuclease and ATPase activities but not for modification. Cleaves only non-methylated DNA, hemi-methylated and fully methylated DNA are not substrates. After locating a non-methylated recognition site, the enzyme complex serves as a molecular motor that translocates DNA in an ATP-dependent manner until a collision occurs that triggers cleavage. The prr locus restricts phage T4 mutants lacking polynucleotide kinase or RNA ligase; T4 mutants lacking these genes manifest a T4-induced anticodon nuclease (ACNase). This is a putative 'masking-agent' for the ACNase encoded by prrC. It is thought that Stp and other T4-encoded ACNase factors counteract the masking agents, thus activating the latent ACNase. This Escherichia coli protein is Type I restriction enzyme EcoprrI endonuclease subunit.